The chain runs to 2922 residues: Small ribosomal subunit protein uS4c (2922 aa).

Residues 111-174 (MRLDNIVFRL…ISMELVSRFL (64 aa)) form the S4 RNA-binding domain.

The protein belongs to the universal ribosomal protein uS4 family. Part of the 30S ribosomal subunit. Contacts protein S5. The interaction surface between S4 and S5 is involved in control of translational fidelity.

It is found in the plastid. The protein localises to the chloroplast. One of the primary rRNA binding proteins, it binds directly to 16S rRNA where it nucleates assembly of the body of the 30S subunit. In terms of biological role, with S5 and S12 plays an important role in translational accuracy. The chain is Small ribosomal subunit protein uS4c (rps4) from Stigeoclonium helveticum (Green alga).